The chain runs to 398 residues: MTALARRYDTQIHRRVTRTVMVGDVPVGSEHPIVVQSMINEDTLDIEAAVAGIIRLAEAGSEIVRVTTPSMAHAKAMGQIRKELRQRGCSVPLVADVHHNGVKIALEVAQHVDKVRINPGLFIFDKPDPNRQEFSPEEFAAIGQRIRETFEPLVTLLRDQNKALRIGVNHGSLAERMLFTYGDTPEGMVESAMEFVRICHELDFHNILISMKASRAPVMLAAYRLMADTMDKEGFNYPLHLGVTEAGDGDYGRIKSTAGIATLLADGLGDTLRVSLTEAPEKEIPVCYSILQSLGLRKTMVEYVACPSCGRTLFNLEEVLHKVRNATSHLTGLDIAVMGCIVNGPGEMADADYGYVGKTPGVISLYRGRDEIRKVPEAEGVEALIQLIKEDGRWVEPA.

C306, C309, C340, and E347 together coordinate [4Fe-4S] cluster.

It belongs to the IspG family. [4Fe-4S] cluster is required as a cofactor.

It catalyses the reaction (2E)-4-hydroxy-3-methylbut-2-enyl diphosphate + 2 oxidized [2Fe-2S]-[ferredoxin] + H2O = 2-C-methyl-D-erythritol 2,4-cyclic diphosphate + 2 reduced [2Fe-2S]-[ferredoxin] + H(+). Its pathway is isoprenoid biosynthesis; isopentenyl diphosphate biosynthesis via DXP pathway; isopentenyl diphosphate from 1-deoxy-D-xylulose 5-phosphate: step 5/6. In terms of biological role, converts 2C-methyl-D-erythritol 2,4-cyclodiphosphate (ME-2,4cPP) into 1-hydroxy-2-methyl-2-(E)-butenyl 4-diphosphate. In Synechococcus sp. (strain CC9605), this protein is 4-hydroxy-3-methylbut-2-en-1-yl diphosphate synthase (ferredoxin).